A 187-amino-acid polypeptide reads, in one-letter code: Elongation factor P (187 aa).

It belongs to the elongation factor P family.

The protein resides in the cytoplasm. It functions in the pathway protein biosynthesis; polypeptide chain elongation. In terms of biological role, involved in peptide bond synthesis. Stimulates efficient translation and peptide-bond synthesis on native or reconstituted 70S ribosomes in vitro. Probably functions indirectly by altering the affinity of the ribosome for aminoacyl-tRNA, thus increasing their reactivity as acceptors for peptidyl transferase. This Rhizorhabdus wittichii (strain DSM 6014 / CCUG 31198 / JCM 15750 / NBRC 105917 / EY 4224 / RW1) (Sphingomonas wittichii) protein is Elongation factor P.